Reading from the N-terminus, the 1080-residue chain is DNA-directed RNA polymerase subunit beta C-terminal section (1080 aa).

The protein belongs to the RNA polymerase beta chain family. As to quaternary structure, in plastids the minimal PEP RNA polymerase catalytic core is composed of four subunits: alpha, beta, beta', and beta''. When a (nuclear-encoded) sigma factor is associated with the core the holoenzyme is formed, which can initiate transcription.

It localises to the plastid. The protein localises to the chloroplast. The catalysed reaction is RNA(n) + a ribonucleoside 5'-triphosphate = RNA(n+1) + diphosphate. Its function is as follows. DNA-dependent RNA polymerase catalyzes the transcription of DNA into RNA using the four ribonucleoside triphosphates as substrates. This Stigeoclonium helveticum (Green alga) protein is DNA-directed RNA polymerase subunit beta C-terminal section (rpoB2).